A 286-amino-acid polypeptide reads, in one-letter code: Phycobilisome 32.1 kDa linker polypeptide, phycocyanin-associated, rod (286 aa).

Residues 2–180 form the PBS-linker domain; that stretch reads AITAAASRLG…LYRGYANSDR (179 aa). The CpcD-like domain maps to 234–286; sequence DRVYRIEVTGVRSPGYPSVRRSSYAIIVPYERLSEKIQQIHKLGGKIVSITSA.

It belongs to the phycobilisome linker protein family.

Its subcellular location is the cellular thylakoid membrane. Functionally, rod linker protein, associated with phycocyanin. Linker polypeptides determine the state of aggregation and the location of the disk-shaped phycobiliprotein units within the phycobilisome and modulate their spectroscopic properties in order to mediate a directed and optimal energy transfer. The protein is Phycobilisome 32.1 kDa linker polypeptide, phycocyanin-associated, rod (cpcC) of Mastigocladus laminosus (Fischerella sp.).